Consider the following 687-residue polypeptide: Fimbrin-5 (687 aa).

Residues 7-74 form the EF-hand domain; that stretch reads VLVSDPWLQS…KSVLDKSYPN (68 aa). Calponin-homology (CH) domains follow at residues 122–239, 267–370, 392–498, and 513–621; these read ESEK…KIQM, LAPE…QHRN, SREE…RYTM, and EITD…YWSL. 2 actin-binding regions span residues 122 to 370 and 392 to 621; these read ESEK…QHRN and SREE…YWSL. The segment at 628 to 687 is disordered; it reads ESTVSEDATDDGDANSVAGEISNLSIDGASESSPTVQDQELLTKADNDEDEVDGENNKDA. Positions 649–667 are enriched in polar residues; the sequence is SNLSIDGASESSPTVQDQE.

In terms of assembly, interacts with F-actin. In terms of tissue distribution, expressed in mature pollen.

Its subcellular location is the cytoplasm. It localises to the cytoskeleton. Cross-links actin filaments (F-actin) in a calcium independent manner. Induces the formation of actin bundles. Stabilizes and prevents F-actin depolymerization mediated by latrunculin B (LatB). The protein is Fimbrin-5 of Arabidopsis thaliana (Mouse-ear cress).